Here is a 241-residue protein sequence, read N- to C-terminus: MAFGPAAMGYDRAITIFSPDGSLYQVDYAFEAVKKGWTAIGIKSKSSVVIASEKRKAQSLLDVDSIEKVFLIDDHVGCSFAGLASDGRVLIDYARNIALQHRLIYDEPVSIDYLTKSVADVKQMYTQHGGVRPFGVALVIAGIDKSVPKLFMTEPSGQYMPYQAVAIGQGYYTATEFLEKNYKEDLNVEETILLALKALSATLKPNEKLTPNTVEIGYASTQTGLFLKMTNEDKNMYLQKL.

The protein belongs to the peptidase T1A family. The 20S proteasome core is composed of 14 alpha and 14 beta subunits that assemble into four stacked heptameric rings, resulting in a barrel-shaped structure. The two inner rings, each composed of seven catalytic beta subunits, are sandwiched by two outer rings, each composed of seven alpha subunits. The catalytic chamber with the active sites is on the inside of the barrel. Has a gated structure, the ends of the cylinder being occluded by the N-termini of the alpha-subunits. Is capped at one or both ends by the proteasome regulatory ATPase, PAN.

It localises to the cytoplasm. Its activity is regulated as follows. The formation of the proteasomal ATPase PAN-20S proteasome complex, via the docking of the C-termini of PAN into the intersubunit pockets in the alpha-rings, triggers opening of the gate for substrate entry. Interconversion between the open-gate and close-gate conformations leads to a dynamic regulation of the 20S proteasome proteolysis activity. Component of the proteasome core, a large protease complex with broad specificity involved in protein degradation. This is Proteasome subunit alpha from Saccharolobus solfataricus (strain ATCC 35092 / DSM 1617 / JCM 11322 / P2) (Sulfolobus solfataricus).